The primary structure comprises 459 residues: Fe(3+)-Zn(2+) purple acid phosphatase (459 aa).

Residues 1–22 (MGVVKGLLALALVLNVVVVSNG) form the signal peptide. Position 23 is a blocked amino end (Gly) (Gly23). An N-linked (GlcNAc...) asparagine; partial glycan is attached at Asn108. Asn136 is a glycosylation site (N-linked (GlcNAc...) asparagine). Residue Asp162 participates in Fe cation binding. Asn170 carries an N-linked (GlcNAc...) asparagine glycan. Fe cation contacts are provided by Asp191 and Tyr194. Asp191 lines the Zn(2+) pocket. Zn(2+) is bound at residue Asn228. Asn238 is a glycosylation site (N-linked (GlcNAc...) asparagine). His313 contributes to the Zn(2+) binding site. Residue His323 is the Proton donor of the active site. His350 is a Zn(2+) binding site. Residue His352 coordinates Fe cation. A glycan (N-linked (GlcNAc...) asparagine) is linked at Asn423.

It belongs to the metallophosphoesterase superfamily. Purple acid phosphatase family. In terms of assembly, homodimer; disulfide-linked. Fe cation serves as cofactor. Requires Zn(2+) as cofactor.

It localises to the secreted. The catalysed reaction is a phosphate monoester + H2O = an alcohol + phosphate. Inhibited by compounds CC24201, CC27209, and MO07123. Inhibited by the tetraoxoanions molybdate and phosphate. Not inhibited by EDTA or tartrate. This chain is Fe(3+)-Zn(2+) purple acid phosphatase, found in Phaseolus vulgaris (Kidney bean).